Here is a 287-residue protein sequence, read N- to C-terminus: Phosphatidylserine decarboxylase proenzyme (287 aa).

Active-site charge relay system; for autoendoproteolytic cleavage activity residues include Asp90, His147, and Ser253. Ser253 acts as the Schiff-base intermediate with substrate; via pyruvic acid; for decarboxylase activity in catalysis. Ser253 carries the post-translational modification Pyruvic acid (Ser); by autocatalysis.

This sequence belongs to the phosphatidylserine decarboxylase family. PSD-B subfamily. Prokaryotic type I sub-subfamily. In terms of assembly, heterodimer of a large membrane-associated beta subunit and a small pyruvoyl-containing alpha subunit. The cofactor is pyruvate. Post-translationally, is synthesized initially as an inactive proenzyme. Formation of the active enzyme involves a self-maturation process in which the active site pyruvoyl group is generated from an internal serine residue via an autocatalytic post-translational modification. Two non-identical subunits are generated from the proenzyme in this reaction, and the pyruvate is formed at the N-terminus of the alpha chain, which is derived from the carboxyl end of the proenzyme. The autoendoproteolytic cleavage occurs by a canonical serine protease mechanism, in which the side chain hydroxyl group of the serine supplies its oxygen atom to form the C-terminus of the beta chain, while the remainder of the serine residue undergoes an oxidative deamination to produce ammonia and the pyruvoyl prosthetic group on the alpha chain. During this reaction, the Ser that is part of the protease active site of the proenzyme becomes the pyruvoyl prosthetic group, which constitutes an essential element of the active site of the mature decarboxylase.

Its subcellular location is the cell membrane. It catalyses the reaction a 1,2-diacyl-sn-glycero-3-phospho-L-serine + H(+) = a 1,2-diacyl-sn-glycero-3-phosphoethanolamine + CO2. Its pathway is phospholipid metabolism; phosphatidylethanolamine biosynthesis; phosphatidylethanolamine from CDP-diacylglycerol: step 2/2. Catalyzes the formation of phosphatidylethanolamine (PtdEtn) from phosphatidylserine (PtdSer). The chain is Phosphatidylserine decarboxylase proenzyme from Aliivibrio salmonicida (strain LFI1238) (Vibrio salmonicida (strain LFI1238)).